Consider the following 128-residue polypeptide: Glycine cleavage system H protein (128 aa).

Positions 25-107 (TVRVGITDFA…YEGGWLFEIT (83 aa)) constitute a Lipoyl-binding domain. The residue at position 66 (Lys-66) is an N6-lipoyllysine.

This sequence belongs to the GcvH family. The glycine cleavage system is composed of four proteins: P, T, L and H. Requires (R)-lipoate as cofactor.

Its function is as follows. The glycine cleavage system catalyzes the degradation of glycine. The H protein shuttles the methylamine group of glycine from the P protein to the T protein. The polypeptide is Glycine cleavage system H protein (Micrococcus luteus (strain ATCC 4698 / DSM 20030 / JCM 1464 / CCM 169 / CCUG 5858 / IAM 1056 / NBRC 3333 / NCIMB 9278 / NCTC 2665 / VKM Ac-2230) (Micrococcus lysodeikticus)).